Reading from the N-terminus, the 470-residue chain is L-fuculokinase (470 aa).

The protein belongs to the FGGY kinase family. A divalent metal cation is required as a cofactor.

It catalyses the reaction L-fuculose + ATP = L-fuculose 1-phosphate + ADP + H(+). It functions in the pathway carbohydrate degradation; L-fucose degradation; L-lactaldehyde and glycerone phosphate from L-fucose: step 2/3. Functionally, catalyzes the phosphorylation of L-fuculose. The polypeptide is L-fuculokinase (Haemophilus influenzae (strain ATCC 51907 / DSM 11121 / KW20 / Rd)).